The chain runs to 279 residues: MPPVLRTVAELRARVSDWKAAGETVGVVPTMGALHEGHLSLARRARAACDRVIVTIFVNPRQFNNPADLEKYPRTEAQDAALLASVGVDAVFAPGPEEVYPRGFATNVSVSGVSEPLEGAHRPGHFDGVATVVAKLFGMTRADRAFFGEKDWQQLMVVRRLVADLNIPVTIEGCATVREADGLALSSRNRRLSAEGRARAPALVRAMQAATEAMRGGQAVPEALAEARAAVLAAGFETVDYLELRTADLLLPMERLEGRGRLLAAATLDGVRLIDNIPV.

31 to 38 (MGALHEGH) lines the ATP pocket. H38 (proton donor) is an active-site residue. (R)-pantoate is bound at residue Q62. Residue Q62 coordinates beta-alanine. ATP is bound at residue 148-151 (GEKD). Q154 provides a ligand contact to (R)-pantoate. ATP is bound by residues V177 and 185–188 (LSSR).

It belongs to the pantothenate synthetase family. In terms of assembly, homodimer.

Its subcellular location is the cytoplasm. The catalysed reaction is (R)-pantoate + beta-alanine + ATP = (R)-pantothenate + AMP + diphosphate + H(+). It participates in cofactor biosynthesis; (R)-pantothenate biosynthesis; (R)-pantothenate from (R)-pantoate and beta-alanine: step 1/1. Its function is as follows. Catalyzes the condensation of pantoate with beta-alanine in an ATP-dependent reaction via a pantoyl-adenylate intermediate. The protein is Pantothenate synthetase of Cereibacter sphaeroides (strain ATCC 17029 / ATH 2.4.9) (Rhodobacter sphaeroides).